We begin with the raw amino-acid sequence, 283 residues long: MLIIETLPLLRQQIRRLRMEGKRVALVPTMGNLHDGHMKLVDEAKAHADVVVVSIFVNPMQFDRPEDLARYPRTLQEDCEKLNKRKVDLVFAPSVKEIYPNGTETHTYVDVPGLSTMLEGASRPGHFRGVSTIVSKLFNLVQPDIACFGEKDFQQLALIRKMVADMGFDIEIVGVPIMRAKDGLALSSRNGYLTAEQRKIAPGLYKVLSSIADKLQAGERDLDEIIAIAGQELNEKGFRSDDIQIRDADTLLEVSENSKRAVILVAAWLGDARLIDNKLVELA.

An ATP-binding site is contributed by 30 to 37; that stretch reads MGNLHDGH. The active-site Proton donor is the histidine 37. A (R)-pantoate-binding site is contributed by glutamine 61. Glutamine 61 serves as a coordination point for beta-alanine. Residue 149–152 participates in ATP binding; sequence GEKD. Glutamine 155 serves as a coordination point for (R)-pantoate. 186–189 provides a ligand contact to ATP; it reads LSSR.

Belongs to the pantothenate synthetase family. Homodimer.

The protein localises to the cytoplasm. It catalyses the reaction (R)-pantoate + beta-alanine + ATP = (R)-pantothenate + AMP + diphosphate + H(+). It functions in the pathway cofactor biosynthesis; (R)-pantothenate biosynthesis; (R)-pantothenate from (R)-pantoate and beta-alanine: step 1/1. Functionally, catalyzes the condensation of pantoate with beta-alanine in an ATP-dependent reaction via a pantoyl-adenylate intermediate. The polypeptide is Pantothenate synthetase (Escherichia coli O45:K1 (strain S88 / ExPEC)).